We begin with the raw amino-acid sequence, 356 residues long: Hyaluronan and proteoglycan link protein 1 (356 aa).

A propeptide spanning residues 1–9 (MRSLLLLVL) is cleaved from the precursor. An Ig-like V-type domain is found at 40–154 (PRLLVEAEQA…EGLEDDTAVV (115 aa)). N-linked (GlcNAc...) asparagine glycosylation is present at Asn58. 5 disulfides stabilise this stretch: Cys63–Cys141, Cys183–Cys254, Cys207–Cys228, Cys281–Cys351, and Cys306–Cys327. Link domains are found at residues 161–256 (VVFP…FCFT) and 261–353 (GRFY…YCFR).

This sequence belongs to the HAPLN family. In terms of tissue distribution, ubiquitously expressed.

Its subcellular location is the secreted. It is found in the extracellular space. It localises to the extracellular matrix. Functionally, stabilizes the aggregates of proteoglycan monomers with hyaluronic acid in the extracellular cartilage matrix. The chain is Hyaluronan and proteoglycan link protein 1 (Hapln1) from Mus musculus (Mouse).